Consider the following 177-residue polypeptide: GTP-dependent dephospho-CoA kinase (177 aa).

9 residues coordinate GTP: G25, Y31, D48, V49, V50, D67, K69, E124, and D147.

The protein belongs to the GTP-dependent DPCK family. Monomer in solution.

The enzyme catalyses 3'-dephospho-CoA + GTP = GDP + CoA + H(+). The protein operates within cofactor biosynthesis; coenzyme A biosynthesis. Functionally, catalyzes the GTP-dependent phosphorylation of the 3'-hydroxyl group of dephosphocoenzyme A to form coenzyme A (CoA). Can also use UTP, with lower efficiency and has weak activity with ATP, but shows a strong preference for GTP as the phosphate donor. In Thermococcus kodakarensis (strain ATCC BAA-918 / JCM 12380 / KOD1) (Pyrococcus kodakaraensis (strain KOD1)), this protein is GTP-dependent dephospho-CoA kinase.